Here is a 343-residue protein sequence, read N- to C-terminus: Cytoplasmic tRNA 2-thiolation protein 1 (343 aa).

This sequence belongs to the TtcA family. CTU1/NCS6/ATPBD3 subfamily.

The protein localises to the cytoplasm. The protein operates within tRNA modification; 5-methoxycarbonylmethyl-2-thiouridine-tRNA biosynthesis. Its function is as follows. Plays a central role in 2-thiolation of mcm(5)S(2)U at tRNA wobble positions of tRNA(Lys), tRNA(Glu) and tRNA(Gln). Directly binds tRNAs and probably acts by catalyzing adenylation of tRNAs, an intermediate required for 2-thiolation. It is unclear whether it acts as a sulfurtransferase that transfers sulfur from thiocarboxylated URM1 onto the uridine of tRNAs at wobble position. The protein is Cytoplasmic tRNA 2-thiolation protein 1 of Drosophila ananassae (Fruit fly).